A 508-amino-acid chain; its full sequence is Photosystem II CP47 reaction center protein (508 aa).

6 helical membrane passes run 21–36 (SVHI…WAGS), 101–115 (IVFS…IWHW), 140–156 (GIHL…FGAF), 203–218 (IAAG…FHLS), 237–252 (VLSS…AFVV), and 457–472 (SFAL…HGAR).

Belongs to the PsbB/PsbC family. PsbB subfamily. As to quaternary structure, PSII is composed of 1 copy each of membrane proteins PsbA, PsbB, PsbC, PsbD, PsbE, PsbF, PsbH, PsbI, PsbJ, PsbK, PsbL, PsbM, PsbT, PsbX, PsbY, PsbZ, Psb30/Ycf12, at least 3 peripheral proteins of the oxygen-evolving complex and a large number of cofactors. It forms dimeric complexes. Binds multiple chlorophylls. PSII binds additional chlorophylls, carotenoids and specific lipids. is required as a cofactor.

It localises to the plastid. It is found in the chloroplast thylakoid membrane. In terms of biological role, one of the components of the core complex of photosystem II (PSII). It binds chlorophyll and helps catalyze the primary light-induced photochemical processes of PSII. PSII is a light-driven water:plastoquinone oxidoreductase, using light energy to abstract electrons from H(2)O, generating O(2) and a proton gradient subsequently used for ATP formation. This Nymphaea alba (White water-lily) protein is Photosystem II CP47 reaction center protein.